We begin with the raw amino-acid sequence, 427 residues long: 3-phosphoshikimate 1-carboxyvinyltransferase (427 aa).

Lysine 20, serine 21, and arginine 25 together coordinate 3-phosphoshikimate. Lysine 20 provides a ligand contact to phosphoenolpyruvate. Residues glycine 92 and arginine 120 each coordinate phosphoenolpyruvate. Residues serine 166, glutamine 168, aspartate 312, and lysine 339 each contribute to the 3-phosphoshikimate site. Glutamine 168 serves as a coordination point for phosphoenolpyruvate. Aspartate 312 (proton acceptor) is an active-site residue. Residues arginine 343 and arginine 385 each coordinate phosphoenolpyruvate.

It belongs to the EPSP synthase family. In terms of assembly, monomer.

The protein localises to the cytoplasm. It carries out the reaction 3-phosphoshikimate + phosphoenolpyruvate = 5-O-(1-carboxyvinyl)-3-phosphoshikimate + phosphate. The protein operates within metabolic intermediate biosynthesis; chorismate biosynthesis; chorismate from D-erythrose 4-phosphate and phosphoenolpyruvate: step 6/7. In terms of biological role, catalyzes the transfer of the enolpyruvyl moiety of phosphoenolpyruvate (PEP) to the 5-hydroxyl of shikimate-3-phosphate (S3P) to produce enolpyruvyl shikimate-3-phosphate and inorganic phosphate. The protein is 3-phosphoshikimate 1-carboxyvinyltransferase of Streptococcus pyogenes serotype M4 (strain MGAS10750).